A 130-amino-acid chain; its full sequence is Large ribosomal subunit protein bL12 (130 aa).

It belongs to the bacterial ribosomal protein bL12 family. In terms of assembly, homodimer. Part of the ribosomal stalk of the 50S ribosomal subunit. Forms a multimeric L10(L12)X complex, where L10 forms an elongated spine to which 2 to 4 L12 dimers bind in a sequential fashion. Binds GTP-bound translation factors.

Functionally, forms part of the ribosomal stalk which helps the ribosome interact with GTP-bound translation factors. Is thus essential for accurate translation. This Mycolicibacterium vanbaalenii (strain DSM 7251 / JCM 13017 / BCRC 16820 / KCTC 9966 / NRRL B-24157 / PYR-1) (Mycobacterium vanbaalenii) protein is Large ribosomal subunit protein bL12.